The chain runs to 307 residues: N-myc-interactor (307 aa).

Residues 1–24 (MEADKDDTQQILKEHSPDEFIKDE) form a disordered region. Phosphoserine is present on serine 16. Residue lysine 22 forms a Glycyl lysine isopeptide (Lys-Gly) (interchain with G-Cter in ubiquitin) linkage. A coiled-coil region spans residues 30–64 (IDEITKKNIQLKKEIQKLETELQEATKEFQIKEDI). 2 NID domains span residues 103-192 (GQAL…GEVD) and 201-292 (GSAV…EVDV).

The protein belongs to the NMI family. As to quaternary structure, interacts with MYCN and MYC, as well as with other transcription factors with a Zip, HLH or a HLH-Zip motif. Interacts with all STAT proteins except STAT2. Interacts with IRF7, the interaction is direct and leads to the inhibition of IRF7-mediated type I IFN production. Interacts (via coiled-coil domain) with TRIM21 (via the SPRY domain); the interaction leads to 'Lys-63'-linked ubiquitination of NMI. Interacts with IFI35; the interaction is direct and is facilitated by TRIM21. Interacts with TLR4; the interaction is direct and leads to NF-kappa-B activation. (Microbial infection) Interacts with human cytomegalovirus protein UL23; this interaction inhibits NMI-mediated transcription of interferon-gamma stimulated genes. Post-translationally, ubiquitinated. 'Lys-63'-linked ubiquitination by TRIM21 promotes interaction with IFI35 and inhibits virus-triggered type I IFN-beta production. As to expression, expressed in adult spleen, liver, and kidney. Expressed in fetal thymus, liver, placenta, spleen, lung, and kidney but not brain. Expressed in macrophages.

It is found in the cytoplasm. It localises to the nucleus. Its subcellular location is the secreted. Functionally, acts as a signaling pathway regulator involved in innate immune system response. In response to interleukin 2/IL2 and interferon IFN-gamma/IFNG, interacts with signal transducer and activator of transcription/STAT which activate the transcription of downstream genes involved in a multitude of signals for development and homeostasis. Enhances the recruitment of CBP/p300 coactivators to STAT1 and STAT5, resulting in increased STAT1- and STAT5-dependent transcription. In response to interferon IFN-alpha, associates in a complex with signaling pathway regulator IFI35 to regulate immune response; the complex formation prevents proteasome-mediated degradation of IFI35. In complex with IFI35, inhibits virus-triggered type I IFN-beta production when ubiquitinated by ubiquitin-protein ligase TRIM21. In complex with IFI35, negatively regulates nuclear factor NF-kappa-B signaling by inhibiting the nuclear translocation, activation and transcription of NF-kappa-B subunit p65/RELA, resulting in the inhibition of endothelial cell proliferation, migration and re-endothelialization of injured arteries. Negatively regulates virus-triggered type I interferon/IFN production by inducing proteosome-dependent degradation of IRF7, a transcriptional regulator of type I IFN, thereby interfering with cellular antiviral responses. Beside its role as an intracellular signaling pathway regulator, also functions extracellularly as damage-associated molecular patterns (DAMPs) to promote inflammation, when actively released by macrophage to the extracellular space during cell injury or pathogen invasion. Macrophage-secreted NMI activates NF-kappa-B signaling in adjacent macrophages through Toll-like receptor 4/TLR4 binding and activation, thereby inducing NF-kappa-B translocation from the cytoplasm into the nucleus which promotes the release of pro-inflammatory cytokines. This is N-myc-interactor from Homo sapiens (Human).